Consider the following 1745-residue polypeptide: DNA-directed RNA polymerase II subunit RPB1 (1745 aa).

Residues C67, C70, C77, H80, C107, C110, C148, and C167 each coordinate Zn(2+). Mg(2+) contacts are provided by D481, D483, and D485. Residues 810 to 822 form a bridging helix region; sequence PQEFFFHAMGGRE. Residue K1247 forms a Glycyl lysine isopeptide (Lys-Gly) (interchain with G-Cter in ubiquitin) linkage. The segment at 1530-1745 is disordered; the sequence is NGPTSPGFGD…KEQKDENGTH (216 aa). Over residues 1546 to 1730 the composition is skewed to low complexity; sequence SPTSPAYSPT…SPRSPSYSPS (185 aa). Tandem repeats lie at residues 1552-1558, 1559-1565, 1566-1572, 1573-1579, 1580-1586, 1587-1593, 1594-1600, 1601-1607, 1608-1614, 1615-1621, 1622-1628, 1629-1635, 1636-1642, 1643-1649, 1650-1656, 1657-1663, 1664-1670, 1671-1677, 1678-1684, 1685-1691, 1692-1698, 1699-1705, 1706-1712, and 1713-1719. Residues 1552–1726 form a C-terminal domain (CTD); 25 X 7 AA approximate tandem repeats of Y-S-P-T-S-P-[TSAN] region; the sequence is YSPTSPSYSP…SPQYSPRSPS (175 aa). The stretch at 1720–1726 is one 25; approximate repeat; it reads YSPRSPS. Over residues 1734 to 1745 the composition is skewed to basic and acidic residues; that stretch reads NDKEQKDENGTH.

This sequence belongs to the RNA polymerase beta' chain family. Component of the RNA polymerase II (Pol II) complex consisting of 12 subunits. Post-translationally, the tandem 7 residues repeats in the C-terminal domain (CTD) can be highly phosphorylated. The phosphorylation activates Pol II. Phosphorylation occurs mainly at residues 'Ser-2' and 'Ser-5' of the heptapeptide repeat. The phosphorylation state is believed to result from the balanced action of site-specific CTD kinases and phosphatase, and a 'CTD code' that specifies the position of Pol II within the transcription cycle has been proposed. Following transcription stress, the elongating form of RNA polymerase II (RNA pol IIo) is polyubiquitinated via 'Lys-63'-linkages on Lys-1247 at DNA damage sites without leading to degradation: ubiquitination promotes RNA pol IIo backtracking to allow access by the transcription-coupled nucleotide excision repair (TC-NER) machinery. Subsequent DEF1-dependent polyubiquitination by the elongin complex via 'Lys-48'-linkages may lead to proteasome-mediated degradation; presumably at stalled RNA pol II where TC-NER has failed, to halt global transcription and enable 'last resort' DNA repair pathways.

The protein localises to the nucleus. The enzyme catalyses RNA(n) + a ribonucleoside 5'-triphosphate = RNA(n+1) + diphosphate. DNA-dependent RNA polymerase catalyzes the transcription of DNA into RNA using the four ribonucleoside triphosphates as substrates. Largest and catalytic component of RNA polymerase II which synthesizes mRNA precursors and many functional non-coding RNAs. Forms the polymerase active center together with the second largest subunit. Pol II is the central component of the basal RNA polymerase II transcription machinery. It is composed of mobile elements that move relative to each other. RPB1 is part of the core element with the central large cleft, the clamp element that moves to open and close the cleft and the jaws that are thought to grab the incoming DNA template. At the start of transcription, a single-stranded DNA template strand of the promoter is positioned within the central active site cleft of Pol II. A bridging helix emanates from RPB1 and crosses the cleft near the catalytic site and is thought to promote translocation of Pol II by acting as a ratchet that moves the RNA-DNA hybrid through the active site by switching from straight to bent conformations at each step of nucleotide addition. During transcription elongation, Pol II moves on the template as the transcript elongates. Elongation is influenced by the phosphorylation status of the C-terminal domain (CTD) of Pol II largest subunit (RPB1), which serves as a platform for assembly of factors that regulate transcription initiation, elongation, termination and mRNA processing. In Eremothecium gossypii (strain ATCC 10895 / CBS 109.51 / FGSC 9923 / NRRL Y-1056) (Yeast), this protein is DNA-directed RNA polymerase II subunit RPB1 (RPB1).